Here is a 61-residue protein sequence, read N- to C-terminus: Conotoxin TeAr154 (61 aa).

An N-terminal signal peptide occupies residues 1 to 19 (MHCLPVFVILLLLTASGLS). A propeptide spanning residues 20–47 (VDARPKTEDDVPLSSFRDNTKSTLQRLL) is cleaved from the precursor. Glu-57 is modified (4-carboxyglutamate).

Contains 2 disulfide bonds that can be either 'C1-C3, C2-C4' or 'C1-C4, C2-C3', since these disulfide connectivities have been observed for conotoxins with cysteine framework V (for examples, see AC P0DQQ7 and AC P81755). In terms of processing, contains 2 disulfide bonds. Expressed by the venom duct.

It is found in the secreted. The protein is Conotoxin TeAr154 of Conus textile (Cloth-of-gold cone).